The chain runs to 317 residues: tRNA pseudouridine synthase B (317 aa).

Asp-47 acts as the Nucleophile in catalysis.

It belongs to the pseudouridine synthase TruB family. Type 1 subfamily.

It catalyses the reaction uridine(55) in tRNA = pseudouridine(55) in tRNA. In terms of biological role, responsible for synthesis of pseudouridine from uracil-55 in the psi GC loop of transfer RNAs. This is tRNA pseudouridine synthase B from Shewanella denitrificans (strain OS217 / ATCC BAA-1090 / DSM 15013).